Consider the following 7182-residue polypeptide: Replicase polyprotein 1ab (7182 aa).

A CoV Nsp1 globular domain is found at tyrosine 54–tyrosine 174. The 31-residue stretch at phenylalanine 192–glycine 222 folds into the BetaCoV Nsp1 C-terminal domain. The 263-residue stretch at valine 226–tyrosine 488 folds into the CoV Nsp2 N-terminal domain. Residues cysteine 365, cysteine 370, cysteine 386, and cysteine 389 each coordinate Zn(2+). Residues cysteine 365–cysteine 389 are C4. One can recognise a CoV Nsp2 middle domain in the interval cysteine 493–leucine 681. A CoV Nsp2 C-terminal domain is found at leucine 697–alanine 809. Residues arginine 811–valine 923 enclose the Ubiquitin-like 1 domain. Tandem repeats lie at residues asparagine 945–aspartate 954, asparagine 955–aspartate 964, asparagine 965–aspartate 974, asparagine 975–aspartate 984, asparagine 985–aspartate 994, asparagine 995–aspartate 1004, asparagine 1005–aspartate 1014, asparagine 1015–aspartate 1024, asparagine 1025–aspartate 1034, asparagine 1035–aspartate 1044, asparagine 1045–aspartate 1054, asparagine 1055–aspartate 1064, asparagine 1065–aspartate 1074, and asparagine 1075–aspartate 1084. Positions asparagine 945–aspartate 1084 are 14 X 10 AA tandem repeat of N-[DN]-D-E-D-V-V-T-G-D. A disordered region spans residues aspartate 946–aspartate 1064. Positions valine 1123–asparagine 1373 constitute a Peptidase C16 1 domain. The active-site For PL1-PRO activity is cysteine 1161. Residues cysteine 1238, cysteine 1241, cysteine 1264, and cysteine 1266 each contribute to the Zn(2+) site. A C4-type 1 zinc finger spans residues cysteine 1238–cysteine 1266. Residues histidine 1312 and aspartate 1323 each act as for PL1-PRO activity in the active site. Positions glutamate 1351–valine 1522 constitute a Macro domain. In terms of domain architecture, DPUP spans asparagine 1578–alanine 1649. The region spanning alanine 1649–glutamine 1704 is the Ubiquitin-like 2 domain. In terms of domain architecture, Peptidase C16 2 spans serine 1718–glutamine 1978. The active-site For PL2-PRO activity is cysteine 1757. Positions 1835, 1837, 1869, and 1871 each coordinate Zn(2+). The C4-type 2 zinc finger occupies cysteine 1835–cysteine 1871. Active-site for PL2-PRO activity residues include histidine 1914 and aspartate 1928. In terms of domain architecture, Nucleic acid-binding spans isoleucine 1992–serine 2093. The G2M domain occupies glutamate 2108–glutamate 2257. Transmembrane regions (helical) follow at residues alanine 2226–phenylalanine 2246, phenylalanine 2287–phenylalanine 2307, and phenylalanine 2318–isoleucine 2338. The HD1 stretch occupies residues alanine 2226–valine 2463. A 3Ecto domain is found at glycine 2323–aspartate 2384. Disulfide bonds link cysteine 2339–cysteine 2363 and cysteine 2354–cysteine 2360. Helical transmembrane passes span leucine 2401–leucine 2421 and phenylalanine 2443–valine 2463. Residues glycine 2471–aspartate 2561 form a Y1 region. One can recognise a CoV Nsp3 Y domain in the interval glycine 2471–glycine 2838. 8 residues coordinate Zn(2+): histidine 2475, cysteine 2480, cysteine 2485, cysteine 2488, cysteine 2521, histidine 2524, cysteine 2528, and cysteine 2531. A ZF1 region spans residues histidine 2475 to cysteine 2488. Residues cysteine 2521–cysteine 2531 are ZF2. Positions alanine 2562–alanine 2654 are Y2. Residues alanine 2562 to glycine 2838 are coV-Y. The Y3 stretch occupies residues cysteine 2655 to glycine 2737. The interval leucine 2738 to glycine 2838 is Y4. Transmembrane regions (helical) follow at residues leucine 2844–proline 2864, alanine 3119–isoleucine 3139, valine 3151–valine 3171, valine 3178–methionine 3198, and isoleucine 3203–isoleucine 3223. The interval leucine 2844–isoleucine 3223 is HD2. The region spanning isoleucine 3237–glutamine 3334 is the Nsp4C domain. Residues serine 3335–glutamine 3637 enclose the Peptidase C30 domain. Residues histidine 3375 and cysteine 3479 each act as for 3CL-PRO activity in the active site. Transmembrane regions (helical) follow at residues isoleucine 3651–phenylalanine 3671, threonine 3676–valine 3696, phenylalanine 3701–valine 3721, phenylalanine 3744–threonine 3764, isoleucine 3772–glycine 3792, leucine 3800–isoleucine 3820, and leucine 3843–serine 3863. The segment at isoleucine 3651–serine 3863 is HD3. In terms of domain architecture, RdRp Nsp7 cofactor spans serine 3925–glutamine 4013. The RdRp Nsp8 cofactor domain occupies alanine 4014–glutamine 4210. One can recognise a Nsp9 ssRNA-binding domain in the interval asparagine 4211 to glutamine 4320. In terms of domain architecture, ExoN/MTase coactivator spans alanine 4321–serine 4458. Zn(2+) contacts are provided by cysteine 4394, cysteine 4397, histidine 4403, cysteine 4410, cysteine 4436, cysteine 4439, cysteine 4447, and cysteine 4449. Zinc fingers lie at residues cysteine 4394–cysteine 4410 and cysteine 4436–cysteine 4449. The NiRAN domain maps to phenylalanine 4463–tyrosine 4718. Mn(2+) is bound by residues asparagine 4666 and aspartate 4675. One can recognise a Nsp12 Interface domain in the interval arginine 4719–tyrosine 4817. The Zn(2+) site is built by histidine 4748, cysteine 4754, cysteine 4759, cysteine 4763, and cysteine 4940. The Nsp12 RNA-dependent RNA polymerase domain occupies arginine 4818 to glutamine 5385. The tract at residues serine 4820–alanine 5034 is rdRp Fingers N-ter. A rdRp Palm N-ter region spans residues threonine 5035–proline 5073. One can recognise a RdRp catalytic domain in the interval proline 5065–glycine 5227. Positions lysine 5074–glycine 5132 are rdRp Fingers C-ter. The Zn(2+) site is built by histidine 5095, cysteine 5098, and cysteine 5099. Residues threonine 5133 to glutamine 5268 form a rdRp Palm C-ter region. Active-site residues include serine 5212, aspartate 5213, and aspartate 5214. The tract at residues histidine 5269–glutamine 5385 is rdRp Thumb. The CV ZBD domain occupies serine 5386 to lysine 5498. Residues cysteine 5390, cysteine 5393, cysteine 5401, cysteine 5404, cysteine 5411, cysteine 5414, histidine 5418, histidine 5424, cysteine 5435, cysteine 5440, cysteine 5457, and histidine 5460 each coordinate Zn(2+). Residues serine 5641 to leucine 5822 enclose the (+)RNA virus helicase ATP-binding domain. Glycine 5666–serine 5673 is a binding site for ATP. Residues glycine 5823–asparagine 5992 form the (+)RNA virus helicase C-terminal domain. Residues leucine 6059–cysteine 6274 enclose the ExoN domain. Active-site residues include aspartate 6077, glutamate 6079, and glutamate 6178. Cysteine 6194, cysteine 6197, cysteine 6213, histidine 6216, histidine 6244, cysteine 6248, and histidine 6251 together coordinate Zn(2+). Residues histidine 6255 and aspartate 6260 contribute to the active site. Cysteine 6266 contributes to the Zn(2+) binding site. Residues tyrosine 6283–glutamine 6509 form the N7-MTase domain. Aspartate 6318–glycine 6324 provides a ligand contact to S-adenosyl-L-methionine. The tract at residues cysteine 6396–threonine 6410 is gpppA-binding. Cysteine 6434, cysteine 6455, cysteine 6466, and histidine 6469 together coordinate Zn(2+). Positions serine 6510 to arginine 6570 constitute a Nsp15 N-terminal oligomerization domain. The region spanning serine 6571–valine 6691 is the AV-Nsp11N/CoV-Nsp15M domain. The 140-residue stretch at glutamate 6741–proline 6880 folds into the NendoU domain. Residues histidine 6771, histidine 6786, lysine 6826, lysine 6929, aspartate 7013, lysine 7053, and glutamate 7086 contribute to the active site. One can recognise a Nidovirus-type SAM-dependent 2'-O-MTase domain in the interval threonine 6885–valine 7179.

Belongs to the coronaviruses polyprotein 1ab family. Interacts with host PHB and PHB2. As to quaternary structure, interacts with papain-like protease nsp3 and non-structural protein 6. In terms of assembly, monomer. Homodimer. Only the homodimer shows catalytic activity. Interacts with nsp8 and nsp12 to form the replication-transcription complex (RTC): nsp12, nsp7, two subunits of nsp8, and up to two subunits of nsp13. As to quaternary structure, interacts with nsp7, nsp13 and nsp12 to form the replication-transcription complex (RTC): nsp12, nsp7, two subunits of nsp8, and up to two subunits of nsp13. In terms of assembly, interacts with nsp12. Interacts with proofreading exoribonuclease nsp14 and 2'-O-methyltransferase nsp16; these interactions enhance nsp14 and nsp16 enzymatic activities. As to quaternary structure, interacts with nsp7 and nsp8 to form the replication-transcription complex (RTC): nsp12, nsp7, two subunits of nsp8, and up to two subunits of nsp13. Interacts with nsp9. In terms of assembly, interacts with nsp8 to form the replication-transcription complex (RTC): nsp12, nsp7, two subunits of nsp8, and up to two subunits of nsp13. The cofactor is Mn(2+). It depends on Mg(2+) as a cofactor. Specific enzymatic cleavages in vivo by its own proteases yield mature proteins. 3CL-PRO and PL-PRO proteinases are autocatalytically processed.

The protein localises to the host membrane. It localises to the host cytoplasm. It is found in the host perinuclear region. Its subcellular location is the host endoplasmic reticulum-Golgi intermediate compartment. The catalysed reaction is RNA(n) + a ribonucleoside 5'-triphosphate = RNA(n+1) + diphosphate. It carries out the reaction ATP + H2O = ADP + phosphate + H(+). The enzyme catalyses Thiol-dependent hydrolysis of ester, thioester, amide, peptide and isopeptide bonds formed by the C-terminal Gly of ubiquitin (a 76-residue protein attached to proteins as an intracellular targeting signal).. It catalyses the reaction a 5'-end (N(7)-methyl 5'-triphosphoguanosine)-ribonucleoside in mRNA + S-adenosyl-L-methionine = a 5'-end (N(7)-methyl 5'-triphosphoguanosine)-(2'-O-methyl-ribonucleoside) in mRNA + S-adenosyl-L-homocysteine + H(+). The catalysed reaction is uridylyl-uridylyl-ribonucleotide-RNA = a 3'-end uridylyl-2',3'-cyclophospho-uridine-RNA + a 5'-end dephospho-ribonucleoside-RNA. It carries out the reaction a 5'-end diphospho-ribonucleoside in mRNA + GTP + H(+) = a 5'-end (5'-triphosphoguanosine)-ribonucleoside in mRNA + diphosphate. The enzyme catalyses a 5'-end (5'-triphosphoguanosine)-ribonucleoside in mRNA + S-adenosyl-L-methionine = a 5'-end (N(7)-methyl 5'-triphosphoguanosine)-ribonucleoside in mRNA + S-adenosyl-L-homocysteine. Functionally, the replicase polyprotein of coronaviruses is a multifunctional protein: it contains the activities necessary for the transcription of negative stranded RNA, leader RNA, subgenomic mRNAs and progeny virion RNA as well as proteinases responsible for the cleavage of the polyprotein into functional products. Its function is as follows. Inhibits host translation by interacting with the 40S ribosomal subunit. The nsp1-40S ribosome complex further induces an endonucleolytic cleavage near the 5'UTR of host mRNAs, targeting them for degradation. Viral mRNAs are not susceptible to nsp1-mediated endonucleolytic RNA cleavage thanks to the presence of a 5'-end leader sequence and are therefore protected from degradation. By suppressing host gene expression, nsp1 facilitates efficient viral gene expression in infected cells and evasion from host immune response. May play a role in the modulation of host cell survival signaling pathway by interacting with host PHB and PHB2. Indeed, these two proteins play a role in maintaining the functional integrity of the mitochondria and protecting cells from various stresses. In terms of biological role, responsible for the cleavages located at the N-terminus of the replicase polyprotein. In addition, PL-PRO possesses a deubiquitinating/deISGylating activity and processes both 'Lys-48'- and 'Lys-63'-linked polyubiquitin chains from cellular substrates. Participates together with nsp4 in the assembly of virally-induced cytoplasmic double-membrane vesicles necessary for viral replication. Antagonizes innate immune induction of type I interferon by blocking the phosphorylation, dimerization and subsequent nuclear translocation of host IRF3. Also prevents host NF-kappa-B signaling. Functionally, participates in the assembly of virally-induced cytoplasmic double-membrane vesicles necessary for viral replication. Its function is as follows. Cleaves the C-terminus of replicase polyprotein at 11 sites. Recognizes substrates containing the core sequence [ILMVF]-Q-|-[SGACN]. Also able to bind an ADP-ribose-1''-phosphate (ADRP). Plays a role in the initial induction of autophagosomes from host endoplasmic reticulum. Later, limits the expansion of these phagosomes that are no longer able to deliver viral components to lysosomes. In terms of biological role, forms a hexadecamer with nsp8 (8 subunits of each) that may participate in viral replication by acting as a primase. Alternatively, may synthesize substantially longer products than oligonucleotide primers. Functionally, forms a hexadecamer with nsp7 (8 subunits of each) that may participate in viral replication by acting as a primase. Alternatively, may synthesize substantially longer products than oligonucleotide primers. Its function is as follows. Forms a primer, NSP9-pU, which is utilized by the polymerase for the initiation of RNA chains. Interacts with ribosome signal recognition particle RNA (SRP). Together with NSP8, suppress protein integration into the cell membrane, thereby disrupting host immune defenses. Plays a pivotal role in viral transcription by stimulating both nsp14 3'-5' exoribonuclease and nsp16 2'-O-methyltransferase activities. Therefore plays an essential role in viral mRNAs cap methylation. In terms of biological role, RNA-directed RNA polymerase that catalyzes the transcription of viral genomic and subgenomic RNAs. Acts in complex with nsp7 and nsp8 to transcribe both the minus and positive strands of genomic RNA. The kinase-like NiRAN domain of NSP12 attaches one or more nucleotides to the amino terminus of NSP9, forming a covalent RNA-protein intermediate that serves as transcription/replication primer. Subgenomic RNAs (sgRNAs) are formed by discontinuous transcription: The polymerase has the ability to pause at transcription-regulating sequences (TRS) and jump to the leader TRS, resulting in a major deletion. This creates a series of subgenomic RNAs that are replicated, transcribed and translated. In addition, Nsp12 is a subunit of the viral RNA capping enzyme that catalyzes the RNA guanylyltransferase reaction for genomic and sub-genomic RNAs. Subsequently, the NiRAN domain transfers RNA to GDP, and forms the core cap structure GpppA-RNA. Functionally, multi-functional protein with a zinc-binding domain in N-terminus displaying RNA and DNA duplex-unwinding activities with 5' to 3' polarity. Activity of helicase is dependent on magnesium. Its function is as follows. Plays a role in viral RNA synthesis through two distinct activities. The N7-guanine methyltransferase activity plays a role in the formation of the cap structure GpppA-RNA. The proofreading exoribonuclease reduces the sensitivity of the virus to RNA mutagens during replication. This activity acts on both ssRNA and dsRNA in a 3'-5' direction. Plays a role in viral transcription/replication and prevents the simultaneous activation of host cell dsRNA sensors, such as MDA5/IFIH1, OAS, and PKR. Acts by degrading the 5'-polyuridines generated during replication of the poly(A) region of viral genomic and subgenomic RNAs. Catalyzes a two-step reaction in which a 2'3'-cyclic phosphate (2'3'-cP) is first generated by 2'-O transesterification, which is then hydrolyzed to a 3'-phosphate (3'-P). If not degraded, poly(U) RNA would hybridize with poly(A) RNA tails and activate host dsRNA sensors. In terms of biological role, methyltransferase that mediates mRNA cap 2'-O-ribose methylation to the 5'-cap structure of viral mRNAs. N7-methyl guanosine cap is a prerequisite for binding of nsp16. Therefore plays an essential role in viral mRNAs cap methylation which is essential to evade immune system. This is Replicase polyprotein 1ab (rep) from Human coronavirus HKU1 (isolate N1) (HCoV-HKU1).